A 164-amino-acid chain; its full sequence is Phosphatidyl-N-methylethanolamine N-methyltransferase (164 aa).

The helical intramembrane region spans 1-21; that stretch reads MGLLAAIGVLLPFPFYWWLWT. Over 22–30 the chain is Lumenal; sequence NAQSWVNLC. Residues 31–52 traverse the membrane as a helical segment; the sequence is GRERDPSTVMARVSHVLKAAQL. Residues 53 to 69 lie on the Cytoplasmic side of the membrane; that stretch reads LSLFSVASLSWPPPLYF. A helical membrane pass occupies residues 70 to 90; the sequence is WPLMAFGQFLNFRVYQLLGEA. 74-76 provides a ligand contact to S-adenosyl-L-methionine; that stretch reads AFG. The Lumenal segment spans residues 91–131; that stretch reads GTYYGVRFGKNIPWVTEFPFGVIRDPQYVGSIMSLLACLSW. A helical membrane pass occupies residues 132–151; that stretch reads VPFQYILLWSLGYVFMMFLE. Topologically, residues 152-164 are cytoplasmic; that stretch reads SKEDPNARAKSIS. S-adenosyl-L-methionine is bound at residue 154–155; it reads ED.

This sequence belongs to the class VI-like SAM-binding methyltransferase superfamily. PEMT/PEM2 methyltransferase family.

It is found in the endoplasmic reticulum membrane. It catalyses the reaction a 1,2-diacyl-sn-glycero-3-phospho-N-methylethanolamine + S-adenosyl-L-methionine = a 1,2-diacyl-sn-glycero-3-phospho-N,N-dimethylethanolamine + S-adenosyl-L-homocysteine + H(+). It carries out the reaction a 1,2-diacyl-sn-glycero-3-phospho-N,N-dimethylethanolamine + S-adenosyl-L-methionine = a 1,2-diacyl-sn-glycero-3-phosphocholine + S-adenosyl-L-homocysteine + H(+). Its pathway is phospholipid metabolism; phosphatidylcholine biosynthesis. In terms of biological role, catalyzes the second two steps of the methylation pathway of phosphatidylcholine biosynthesis, the SAM-dependent methylation of phosphatidylmonomethylethanolamine (PMME) to phosphatidyldimethylethanolamine (PDME) and of PDME to phosphatidylcholine (PC). This Arabidopsis thaliana (Mouse-ear cress) protein is Phosphatidyl-N-methylethanolamine N-methyltransferase (PLMT).